A 411-amino-acid polypeptide reads, in one-letter code: AT-hook motif nuclear-localized protein 14 (411 aa).

Disordered stretches follow at residues 1–32, 54–164, 289–348, and 366–411; these read MDPN…QRLT, ASTG…LGSV, KDAA…HQAG, and THSR…QIPD. The segment covering 7 to 19 has biased composition (basic residues); it reads HHHHQQQQLHHLH. Residues 20 to 29 are compositionally biased toward low complexity; it reads QQQQQQQQQQ. Residues 54–66 show a composition bias toward polar residues; it reads ASTGNAVPSSNNG. The Bipartite nuclear localization signal motif lies at 105–113; it reads KRKRGRPRK. Residues 105 to 117 constitute a DNA-binding region (a.T hook); sequence KRKRGRPRKYVTP. Composition is skewed to low complexity over residues 120 to 135 and 144 to 159; these read ALAA…SSSA and VTGG…SKKS. One can recognise a PPC domain in the interval 165–305; that stretch reads GKTGQCFTPH…GKGDASNSGS (141 aa). The span at 306-315 shows a compositional bias: polar residues; the sequence is RLTSPVSSGQ. Gly residues predominate over residues 374 to 390; sequence RGGGNSGHDGRGGGGYD.

The protein resides in the nucleus. Functionally, transcription factor that specifically binds AT-rich DNA sequences related to the nuclear matrix attachment regions (MARs). This is AT-hook motif nuclear-localized protein 14 from Arabidopsis thaliana (Mouse-ear cress).